A 242-amino-acid chain; its full sequence is Basic agglutinin (242 aa).

Residues Asn45 and Asn220 are each glycosylated (N-linked (GlcNAc...) asparagine).

The protein belongs to the leguminous lectin family.

Lectin. This is Basic agglutinin (WBAI) from Psophocarpus tetragonolobus (Winged bean).